The sequence spans 730 residues: Polyphosphate kinase (730 aa).

The segment covering 1–21 (MMRHDRNVTEIDAETRPDENL) has biased composition (basic and acidic residues). A disordered region spans residues 1-39 (MMRHDRNVTEIDAETRPDENLWHSGDSAVGAPPAATPAA). Asn86 is a binding site for ATP. Residues Arg423 and Arg453 each coordinate Mg(2+). Catalysis depends on His483, which acts as the Phosphohistidine intermediate. ATP is bound by residues Tyr516, Arg612, and His640.

This sequence belongs to the polyphosphate kinase 1 (PPK1) family. The cofactor is Mg(2+). Post-translationally, an intermediate of this reaction is the autophosphorylated ppk in which a phosphate is covalently linked to a histidine residue through a N-P bond.

It carries out the reaction [phosphate](n) + ATP = [phosphate](n+1) + ADP. Catalyzes the reversible transfer of the terminal phosphate of ATP to form a long-chain polyphosphate (polyP). The sequence is that of Polyphosphate kinase from Mycolicibacterium paratuberculosis (strain ATCC BAA-968 / K-10) (Mycobacterium paratuberculosis).